The chain runs to 174 residues: Co-chaperone protein HscB homolog (174 aa).

The J domain maps to asparagine 2 to leucine 74.

It belongs to the HscB family. Interacts with HscA and stimulates its ATPase activity.

In terms of biological role, co-chaperone involved in the maturation of iron-sulfur cluster-containing proteins. Seems to help targeting proteins to be folded toward HscA. This is Co-chaperone protein HscB homolog from Shewanella sp. (strain W3-18-1).